A 273-amino-acid chain; its full sequence is Rhamnulose-1-phosphate aldolase (273 aa).

E117 is a catalytic residue. Positions 140, 142, and 211 each coordinate Zn(2+).

This sequence belongs to the aldolase class II family. RhaD subfamily. Requires Zn(2+) as cofactor.

It is found in the cytoplasm. The catalysed reaction is L-rhamnulose 1-phosphate = (S)-lactaldehyde + dihydroxyacetone phosphate. Its pathway is carbohydrate degradation; L-rhamnose degradation; glycerone phosphate from L-rhamnose: step 3/3. Its function is as follows. Catalyzes the reversible cleavage of L-rhamnulose-1-phosphate to dihydroxyacetone phosphate (DHAP) and L-lactaldehyde. The chain is Rhamnulose-1-phosphate aldolase from Listeria monocytogenes serotype 4a (strain HCC23).